We begin with the raw amino-acid sequence, 225 residues long: MGIKDWPQGEGPREKLLLDGAEQLSDAELLAVLLRVGLKGLSAVELARMMITEFGGLRSLLTASQAQVCRLDGIGPVKFAQLQAAVEIGKRISKENLKRGKILSDPDLTRDYLMRQLGDRAYEVFAILLLDSQHRVIQFVELFRGTINSASVYPRDVVGLVLEKKAAAVIVCHNHPSGIAEPSTADRRITERLKQALQTIDVSLLDHMVVGDREIVSFAERGWID.

Residues 102–224 (ILSDPDLTRD…IVSFAERGWI (123 aa)) form the MPN domain. Zn(2+) contacts are provided by His-173, His-175, and Asp-186. A JAMM motif motif is present at residues 173–186 (HNHPSGIAEPSTAD).

It belongs to the UPF0758 family.

In Shewanella piezotolerans (strain WP3 / JCM 13877), this protein is UPF0758 protein swp_2203.